The following is a 248-amino-acid chain: Pyridoxine 5'-phosphate synthase (248 aa).

Asn10 provides a ligand contact to 3-amino-2-oxopropyl phosphate. 12-13 contributes to the 1-deoxy-D-xylulose 5-phosphate binding site; the sequence is DH. 3-amino-2-oxopropyl phosphate is bound at residue Arg21. His46 serves as the catalytic Proton acceptor. 1-deoxy-D-xylulose 5-phosphate contacts are provided by Arg48 and His53. Glu73 acts as the Proton acceptor in catalysis. Residue Thr103 coordinates 1-deoxy-D-xylulose 5-phosphate. His194 (proton donor) is an active-site residue. 3-amino-2-oxopropyl phosphate is bound by residues Gly195 and 216-217; that span reads GH.

It belongs to the PNP synthase family. Homooctamer; tetramer of dimers.

The protein resides in the cytoplasm. The enzyme catalyses 3-amino-2-oxopropyl phosphate + 1-deoxy-D-xylulose 5-phosphate = pyridoxine 5'-phosphate + phosphate + 2 H2O + H(+). It participates in cofactor biosynthesis; pyridoxine 5'-phosphate biosynthesis; pyridoxine 5'-phosphate from D-erythrose 4-phosphate: step 5/5. Catalyzes the complicated ring closure reaction between the two acyclic compounds 1-deoxy-D-xylulose-5-phosphate (DXP) and 3-amino-2-oxopropyl phosphate (1-amino-acetone-3-phosphate or AAP) to form pyridoxine 5'-phosphate (PNP) and inorganic phosphate. The protein is Pyridoxine 5'-phosphate synthase of Legionella pneumophila (strain Paris).